Reading from the N-terminus, the 174-residue chain is Alpha-crystallin B chain (174 aa).

An N-acetylmethionine modification is found at M1. In terms of domain architecture, sHSP spans 55–163; that stretch reads RMPSWLETGL…PERSIPITRE (109 aa). H82, H103, E105, and H110 together coordinate Zn(2+). The interval 148–174 is disordered; the sequence is RKQSDVPERSIPITREEKPAIAGAQRK. Positions 149-166 are enriched in basic and acidic residues; sequence KQSDVPERSIPITREEKP.

It belongs to the small heat shock protein (HSP20) family. As to quaternary structure, heteromer composed of three CRYAA and one CRYAB subunits. Aggregates with homologous proteins, including the small heat shock protein HSPB1, to form large heteromeric complexes. Inter-subunit bridging via zinc ions enhances stability, which is crucial as there is no protein turn over in the lens. In terms of tissue distribution, lens as well as other tissues.

In terms of biological role, may contribute to the transparency and refractive index of the lens. This Anas platyrhynchos (Mallard) protein is Alpha-crystallin B chain (CRYAB).